Here is a 71-residue protein sequence, read N- to C-terminus: Cell division protein ZapB (71 aa).

Residues leucine 5 to methionine 67 adopt a coiled-coil conformation.

This sequence belongs to the ZapB family. In terms of assembly, homodimer. The ends of the coiled-coil dimer bind to each other, forming polymers. Interacts with FtsZ.

Its subcellular location is the cytoplasm. Its function is as follows. Non-essential, abundant cell division factor that is required for proper Z-ring formation. It is recruited early to the divisome by direct interaction with FtsZ, stimulating Z-ring assembly and thereby promoting cell division earlier in the cell cycle. Its recruitment to the Z-ring requires functional FtsA or ZipA. This Aeromonas hydrophila subsp. hydrophila (strain ATCC 7966 / DSM 30187 / BCRC 13018 / CCUG 14551 / JCM 1027 / KCTC 2358 / NCIMB 9240 / NCTC 8049) protein is Cell division protein ZapB.